Consider the following 173-residue polypeptide: Lipoprotein signal peptidase (173 aa).

Transmembrane regions (helical) follow at residues 24-44 (PWLG…IAIL), 55-75 (ITGF…SFLA), 80-100 (WQRW…VWLL), and 105-125 (GQKL…GNVI). Residues D135 and D153 contribute to the active site. A helical membrane pass occupies residues 145-165 (HWPAFNVADCGICIGAVLLII).

Belongs to the peptidase A8 family.

Its subcellular location is the cell inner membrane. The catalysed reaction is Release of signal peptides from bacterial membrane prolipoproteins. Hydrolyzes -Xaa-Yaa-Zaa-|-(S,diacylglyceryl)Cys-, in which Xaa is hydrophobic (preferably Leu), and Yaa (Ala or Ser) and Zaa (Gly or Ala) have small, neutral side chains.. It participates in protein modification; lipoprotein biosynthesis (signal peptide cleavage). Functionally, this protein specifically catalyzes the removal of signal peptides from prolipoproteins. This Ralstonia nicotianae (strain ATCC BAA-1114 / GMI1000) (Ralstonia solanacearum) protein is Lipoprotein signal peptidase.